We begin with the raw amino-acid sequence, 528 residues long: Tyrosine--tRNA ligase, cytoplasmic (528 aa).

An L-tyrosine-binding site is contributed by tyrosine 39. The short motif at threonine 44–tyrosine 52 is the 'HIGH' region element. Residues tyrosine 166, glutamine 170, aspartate 173, and glutamine 188 each contribute to the L-tyrosine site. A 'KMSKS' region motif is present at residues lysine 222–serine 226. The Nuclear localization signal signature appears at lysine 242–lysine 247. Residues glutamate 332 to glutamate 362 form a disordered region. The 105-residue stretch at aspartate 364–tyrosine 468 folds into the tRNA-binding domain.

This sequence belongs to the class-I aminoacyl-tRNA synthetase family. As to quaternary structure, homodimer.

It is found in the cytoplasm. It localises to the nucleus. It carries out the reaction tRNA(Tyr) + L-tyrosine + ATP = L-tyrosyl-tRNA(Tyr) + AMP + diphosphate + H(+). In terms of biological role, catalyzes the attachment of tyrosine to tRNA(Tyr) in a two-step reaction: tyrosine is first activated by ATP to form Tyr-AMP and then transferred to the acceptor end of tRNA(Tyr). This chain is Tyrosine--tRNA ligase, cytoplasmic (yars1), found in Xenopus laevis (African clawed frog).